We begin with the raw amino-acid sequence, 297 residues long: MIPLSVRVPASTANVGPGFDSVGIALSLYLDVVVKEKADKWQVIHSFEESIPTDDKNLIVSTACKVCPSISPHIIEVTSNIPLTRGLGSSASAIVAGIELANQLGNLNLTADQKVQIATNFEGHPDNVAASILGGTVIGALDGKDISVVRIESKELGVISLIPNEELNTDESRSVLPKMFPFHEAVKASAISNVLVAALCQKRWEVVGEMMERDHFHEPYRLELVPLLPSIRKCAKEFGAYGTALSGAGPSIFILTPYEKRQEIAEQLARVFTDMKVCELEIDHKGIIVNKEEHIGS.

82 to 92 (PLTRGLGSSAS) provides a ligand contact to ATP.

The protein belongs to the GHMP kinase family. Homoserine kinase subfamily.

The protein resides in the cytoplasm. The catalysed reaction is L-homoserine + ATP = O-phospho-L-homoserine + ADP + H(+). Its pathway is amino-acid biosynthesis; L-threonine biosynthesis; L-threonine from L-aspartate: step 4/5. Its function is as follows. Catalyzes the ATP-dependent phosphorylation of L-homoserine to L-homoserine phosphate. The polypeptide is Homoserine kinase (Bacillus cereus (strain ATCC 14579 / DSM 31 / CCUG 7414 / JCM 2152 / NBRC 15305 / NCIMB 9373 / NCTC 2599 / NRRL B-3711)).